An 840-amino-acid chain; its full sequence is Homeobox-leucine zipper protein HOX9 (840 aa).

Disordered stretches follow at residues 1–26 (MAAA…AGMD) and 135–160 (NPSL…DASN). Residues 12-21 (GSDGGGGGYD) are compositionally biased toward gly residues. The segment at residues 26–89 (DSGKYVRYTP…NRRCRDKQRK (64 aa)) is a DNA-binding region (homeobox). Positions 86-135 (KQRKEASRLQAVNRKLTAMNKLLMEENERLQKQVSQLVHENAYMKQQLQN) form a coiled coil. In terms of domain architecture, START spans 157 to 385 (DASNPSGLLT…IAQETSGEVV (229 aa)).

It belongs to the HD-ZIP homeobox family. Class III subfamily. Expressed in seedlings, roots, stems, leaf sheaths and blades and panicles.

The protein resides in the nucleus. Functionally, probable transcription factor. This chain is Homeobox-leucine zipper protein HOX9 (HOX9), found in Oryza sativa subsp. japonica (Rice).